The sequence spans 108 residues: uncharacterized protein (108 aa).

This is an uncharacterized protein from Treponema pallidum (strain Nichols).